The following is a 502-amino-acid chain: Probable glycine dehydrogenase (decarboxylating) subunit 2 (502 aa).

An N6-(pyridoxal phosphate)lysine modification is found at K273.

Belongs to the GcvP family. C-terminal subunit subfamily. As to quaternary structure, the glycine cleavage system is composed of four proteins: P, T, L and H. In this organism, the P 'protein' is a heterodimer of two subunits. The cofactor is pyridoxal 5'-phosphate.

The enzyme catalyses N(6)-[(R)-lipoyl]-L-lysyl-[glycine-cleavage complex H protein] + glycine + H(+) = N(6)-[(R)-S(8)-aminomethyldihydrolipoyl]-L-lysyl-[glycine-cleavage complex H protein] + CO2. Its function is as follows. The glycine cleavage system catalyzes the degradation of glycine. The P protein binds the alpha-amino group of glycine through its pyridoxal phosphate cofactor; CO(2) is released and the remaining methylamine moiety is then transferred to the lipoamide cofactor of the H protein. In Pyrococcus furiosus (strain ATCC 43587 / DSM 3638 / JCM 8422 / Vc1), this protein is Probable glycine dehydrogenase (decarboxylating) subunit 2.